Consider the following 381-residue polypeptide: Probable serine/threonine-protein kinase PBL22 (381 aa).

C3 is lipidated: S-palmitoyl cysteine. T64 carries the phosphothreonine modification. A Protein kinase domain is found at 75–351; that stretch reads FREGNIIGKG…GDVVVAFEYI (277 aa). ATP is bound by residues 81-89 and K103; that span reads IGKGGFGSV. A Phosphotyrosine modification is found at Y148. The Proton acceptor role is filled by D201. Position 235 is a phosphoserine (S235). Phosphothreonine is present on residues T236 and T241. Position 249 is a phosphotyrosine (Y249). Residues 361 to 381 are disordered; it reads RRTARKSTDSNRLRRETKQSY.

This sequence belongs to the protein kinase superfamily. Ser/Thr protein kinase family. Palmitoylation at Cys-3 and Cys-6 are required for plasma membrane location.

Its subcellular location is the cell membrane. It catalyses the reaction L-seryl-[protein] + ATP = O-phospho-L-seryl-[protein] + ADP + H(+). The enzyme catalyses L-threonyl-[protein] + ATP = O-phospho-L-threonyl-[protein] + ADP + H(+). Its function is as follows. May be involved in plant defense signaling. In Arabidopsis thaliana (Mouse-ear cress), this protein is Probable serine/threonine-protein kinase PBL22.